Reading from the N-terminus, the 122-residue chain is Phospholipase A2 nigroviriditoxin basic subunit B (122 aa).

Cystine bridges form between cysteine 26-cysteine 115, cysteine 28-cysteine 44, cysteine 43-cysteine 95, cysteine 49-cysteine 122, cysteine 50-cysteine 88, cysteine 57-cysteine 81, and cysteine 75-cysteine 86. 3 residues coordinate Ca(2+): tyrosine 27, glycine 29, and glycine 31. Histidine 47 is an active-site residue. Aspartate 48 lines the Ca(2+) pocket. The active site involves aspartate 89.

This sequence belongs to the phospholipase A2 family. Group II subfamily. D49 sub-subfamily. As to quaternary structure, nigroviriditoxin is a heterodimer of an acidic subunit A and a basic subunit B. It depends on Ca(2+) as a cofactor. Expressed by the venom gland.

It localises to the secreted. It carries out the reaction a 1,2-diacyl-sn-glycero-3-phosphocholine + H2O = a 1-acyl-sn-glycero-3-phosphocholine + a fatty acid + H(+). Functionally, heterodimer A-B: Nigroviriditoxin possesses phospholipase A2 (PLA2) activity. It consists of a non-covalent association of a basic PLA2 subunit B with a non-enzymatic subunit A. Subunit B: Snake venom phospholipase A2 (PLA2) that induces myonecrosis in mice. PLA2 catalyzes the calcium-dependent hydrolysis of the 2-acyl groups in 3-sn-phosphoglycerides. The protein is Phospholipase A2 nigroviriditoxin basic subunit B of Bothriechis nigroviridis (Black-speckled palm pit viper).